A 37-amino-acid chain; its full sequence is Photosystem II reaction center protein T (37 aa).

The chain crosses the membrane as a helical span at residues 3 to 23; it reads ALVYTFLLVGTLGIIFFAIFF.

Belongs to the PsbT family. As to quaternary structure, PSII is composed of 1 copy each of membrane proteins PsbA, PsbB, PsbC, PsbD, PsbE, PsbF, PsbH, PsbI, PsbJ, PsbK, PsbL, PsbM, PsbT, PsbY, PsbZ, Psb30/Ycf12, at least 3 peripheral proteins of the oxygen-evolving complex and a large number of cofactors. It forms dimeric complexes.

It is found in the plastid. It localises to the chloroplast thylakoid membrane. Found at the monomer-monomer interface of the photosystem II (PS II) dimer, plays a role in assembly and dimerization of PSII. PSII is a light-driven water plastoquinone oxidoreductase, using light energy to abstract electrons from H(2)O, generating a proton gradient subsequently used for ATP formation. This chain is Photosystem II reaction center protein T, found in Spirogyra maxima (Green alga).